Consider the following 530-residue polypeptide: MSKDEIKDKKRKSEEYEVVDKKKHKKDKKDKKEKKDKKEKKLKKDKKDKKDKKETKSESESNEDNESVASVSTSSTVDGYTENADLLKVPQSEIDEFFTTNEVAVEDESKLNLRPLLSFSHISLDSRIQAEISKFPKPTPIQAVSWPYLLAGKDVIGVAETGSGKTFAFGVPAINNILTKSGSKPGKNGIQVLIISPTRELASQIYDNLVILTDKVGLECCCVYGGVPKDEQRTQLKRSQVVVATPGRLLDLIQEGAANLSNVNYLVLDEADRMLEKGFEEDIKNIIRETKSTGRQTLMFTATWPKEVRELASTFMNSPIKVSIGNTDELSANKRITQIVEVIDPFKKERKLLELLKKYQSGSKKDDKVLIFALYKKEAARVERNLNYNGYKVSAIHGDLSQQQRTNALDEFKTGRSSILLATDVAARGLDIPNVKTVINLTFPLTVEDYVHRIGRTGRAGKTGTAHTLFTEQEKHLAGSLVNVLNGAGQPVPEELKKFGTHTKKKEHSAYGAFYKDVDMTKKAKKITFD.

A compositionally biased stretch (basic and acidic residues) spans 1-20; sequence MSKDEIKDKKRKSEEYEVVD. The tract at residues 1–77 is disordered; it reads MSKDEIKDKK…VASVSTSSTV (77 aa). Residues 19–58 adopt a coiled-coil conformation; sequence VDKKKHKKDKKDKKEKKDKKEKKLKKDKKDKKDKKETKSE. The span at 21-50 shows a compositional bias: basic residues; the sequence is KKKHKKDKKDKKEKKDKKEKKLKKDKKDKK. Residues 67-77 show a composition bias toward low complexity; it reads SVASVSTSSTV. The Q motif motif lies at 117–143; the sequence is LSFSHISLDSRIQAEISKFPKPTPIQA. Residues 146–322 enclose the Helicase ATP-binding domain; sequence WPYLLAGKDV…STFMNSPIKV (177 aa). 159 to 166 lines the ATP pocket; it reads AETGSGKT. Positions 269–272 match the DEAD box motif; sequence DEAD. The Helicase C-terminal domain occupies 351 to 500; it reads KLLELLKKYQ…PVPEELKKFG (150 aa).

It belongs to the DEAD box helicase family. DDX5/DBP2 subfamily.

The protein resides in the nucleus. It is found in the nucleolus. It catalyses the reaction ATP + H2O = ADP + phosphate + H(+). Its function is as follows. ATP-dependent RNA helicase required for 60S ribosomal subunit synthesis. Involved in efficient pre-rRNA processing, predominantly at site A3, which is necessary for the normal formation of 25S and 5.8S rRNAs. The polypeptide is ATP-dependent RNA helicase DBP3 (DBP3) (Vanderwaltozyma polyspora (strain ATCC 22028 / DSM 70294 / BCRC 21397 / CBS 2163 / NBRC 10782 / NRRL Y-8283 / UCD 57-17) (Kluyveromyces polysporus)).